The primary structure comprises 138 residues: Acidic phospholipase A2 1 (138 aa).

The signal sequence occupies residues 1-16; the sequence is MRTLWIMAVLLVGVDG. 7 cysteine pairs are disulfide-bonded: Cys42–Cys131, Cys44–Cys60, Cys59–Cys110, Cys65–Cys138, Cys66–Cys103, Cys73–Cys97, and Cys91–Cys101. Tyr43, Gly45, and Gly47 together coordinate Ca(2+). Residue His63 is part of the active site. Residue Asp64 coordinates Ca(2+). Residue Asp104 is part of the active site.

The protein belongs to the phospholipase A2 family. Group II subfamily. D49 sub-subfamily. Homodimer. Ca(2+) serves as cofactor. Expressed by the venom gland.

It localises to the secreted. The catalysed reaction is a 1,2-diacyl-sn-glycero-3-phosphocholine + H2O = a 1-acyl-sn-glycero-3-phosphocholine + a fatty acid + H(+). Snake venom phospholipase A2 (PLA2) that is highly lipolytic and myolytic. PLA2 catalyzes the calcium-dependent hydrolysis of the 2-acyl groups in 3-sn-phosphoglycerides. The sequence is that of Acidic phospholipase A2 1 from Protobothrops flavoviridis (Habu).